We begin with the raw amino-acid sequence, 101 residues long: Small ribosomal subunit protein uS14 (101 aa).

This sequence belongs to the universal ribosomal protein uS14 family. As to quaternary structure, part of the 30S ribosomal subunit. Contacts proteins S3 and S10.

In terms of biological role, binds 16S rRNA, required for the assembly of 30S particles and may also be responsible for determining the conformation of the 16S rRNA at the A site. The polypeptide is Small ribosomal subunit protein uS14 (Shewanella baltica (strain OS155 / ATCC BAA-1091)).